The primary structure comprises 538 residues: Phosphatidylethanolamine transferase Mcr-2 (538 aa).

5 helical membrane-spanning segments follow: residues 14-34, 47-67, 72-92, 121-141, and 161-181; these read PFVLMGLVALFLAATANLTFF, LGFIISMAVAVMGAMLLIVVL, YVLKPVLILLLIMGAVTSYFT, LAFFVRIIGLGVLPSVLVAVA, and VSLVLLLVPIGLFSSQYASFF. Zn(2+)-binding residues include Glu-244 and Thr-283. 3 disulfide bridges follow: Cys-279/Cys-289, Cys-354/Cys-362, and Cys-412/Cys-420. Position 283 is a phosphothreonine (Thr-283). Residues Asp-463 and His-464 each contribute to the Zn(2+) site.

Belongs to the phosphoethanolamine transferase family. In terms of assembly, monomer. Phosphorylated at Thr-283; may represent an intermediate in the catalytic mechanism.

Its subcellular location is the cell inner membrane. It catalyses the reaction lipid A (E. coli) + a 1,2-diacyl-sn-glycero-3-phosphoethanolamine + H(+) = lipid A 4'-(2-aminoethyl diphosphate) (E. coli) + a 1,2-diacyl-sn-glycerol. In terms of biological role, probably catalyzes the addition of a phosphoethanolamine moiety to lipid A. Phosphoethanolamine modification of lipid A confers polymyxin resistance. Confers resistance to polymyxin-type antibiotics such as colistin. This Escherichia coli protein is Phosphatidylethanolamine transferase Mcr-2.